Reading from the N-terminus, the 319-residue chain is Cytochrome c biogenesis protein CcsA (319 aa).

The next 7 helical transmembrane spans lie at 9–29 (ILTH…LITL), 44–64 (GVIG…AYSG), 71–91 (LYES…FPYF), 143–163 (MVLG…LLVI), 225–245 (IISL…VWAN), 259–273 (TWAF…IYLH), and 286–306 (AIVA…VNLL).

Belongs to the CcmF/CycK/Ccl1/NrfE/CcsA family. May interact with Ccs1.

It localises to the plastid. The protein localises to the chloroplast thylakoid membrane. In terms of biological role, required during biogenesis of c-type cytochromes (cytochrome c6 and cytochrome f) at the step of heme attachment. The polypeptide is Cytochrome c biogenesis protein CcsA (Oenothera glazioviana (Large-flowered evening primrose)).